A 463-amino-acid polypeptide reads, in one-letter code: L-seryl-tRNA(Sec) selenium transferase (463 aa).

Residue Lys-295 is modified to N6-(pyridoxal phosphate)lysine.

It belongs to the SelA family. As to quaternary structure, homodecamer; pentamer of dimers. Binds only one seryl-tRNA(Sec) per dimer. Pyridoxal 5'-phosphate serves as cofactor.

The protein localises to the cytoplasm. It carries out the reaction L-seryl-tRNA(Sec) + selenophosphate + H(+) = L-selenocysteinyl-tRNA(Sec) + phosphate. The protein operates within aminoacyl-tRNA biosynthesis; selenocysteinyl-tRNA(Sec) biosynthesis; selenocysteinyl-tRNA(Sec) from L-seryl-tRNA(Sec) (bacterial route): step 1/1. In terms of biological role, converts seryl-tRNA(Sec) to selenocysteinyl-tRNA(Sec) required for selenoprotein biosynthesis. This Shigella dysenteriae serotype 1 (strain Sd197) protein is L-seryl-tRNA(Sec) selenium transferase.